We begin with the raw amino-acid sequence, 176 residues long: Protein CURLY FLAG LEAF 2 (176 aa).

The EAR motif lies at 41-46 (FLELSS). Positions 48-82 (FSVPSHLEQCLDLKTGEIYYRSWNSGMRVKEDPRK) constitute a WW domain. 2 disordered regions span residues 77 to 106 (KEDP…SSEE) and 111 to 130 (YESE…YHKE). Over residues 93–106 (SSGESSGTVFSSEE) the composition is skewed to low complexity.

As to quaternary structure, may interact with BHLH122/CFLAP1 and BHLH80/CFLAP2.

In terms of biological role, may negatively regulate the cuticle development by interacting with the HD-ZIP IV transcription factor HDG1. The sequence is that of Protein CURLY FLAG LEAF 2 from Arabidopsis thaliana (Mouse-ear cress).